The primary structure comprises 206 residues: Ribosomal RNA small subunit methyltransferase G (206 aa).

Residues glycine 71, phenylalanine 76, 122–123 (AE), and arginine 135 contribute to the S-adenosyl-L-methionine site.

It belongs to the methyltransferase superfamily. RNA methyltransferase RsmG family.

It is found in the cytoplasm. Specifically methylates the N7 position of a guanine in 16S rRNA. The polypeptide is Ribosomal RNA small subunit methyltransferase G (Bacteroides thetaiotaomicron (strain ATCC 29148 / DSM 2079 / JCM 5827 / CCUG 10774 / NCTC 10582 / VPI-5482 / E50)).